Here is a 5875-residue protein sequence, read N- to C-terminus: Probable E3 ubiquitin-protein ligase DDB_G0283893 (5875 aa).

Disordered regions lie at residues 17-64 (DNNN…QPPE), 164-185 (NNNN…QSNN), 232-276 (DSNN…TTTS), 302-342 (PSFK…CGNG), 642-693 (TTTT…SPPI), 716-740 (SIRS…TTNA), 1081-1101 (ITPT…TSIP), 1291-1367 (DGWE…KEST), 1806-1851 (QESE…SSPP), 1952-1982 (KKPS…KDEV), 2008-2036 (EDED…DDEE), 2109-2203 (KALK…TGSG), 2893-2930 (DSDD…TNDS), 3083-3119 (TSPS…SGSN), and 3195-3214 (LLPP…DNTN). The segment covering 18 to 52 (NNNNNNNNNNNNNNNNNNNNNNNNNNNSNNNNNKN) has biased composition (low complexity). Over residues 237–249 (DNKENKKEDKESS) the composition is skewed to basic and acidic residues. 3 stretches are compositionally biased toward low complexity: residues 250 to 276 (KPIA…TTTS), 317 to 333 (TSTI…ITQP), and 642 to 656 (TTTT…TTTT). Residues 657-669 (NESIPMETTRSST) are compositionally biased toward polar residues. The span at 670 to 693 (PIPIVNNNNNNNDSKSNSKKSPPI) shows a compositional bias: low complexity. Positions 716-725 (SIRSSSNKVN) are enriched in polar residues. Residues 728–740 (TPKSSTTTTTTNA) show a composition bias toward low complexity. Positions 1297–1330 (FNDDDDEEEDEEEEEEMDEDDSENDEDEDSEESE) are enriched in acidic residues. The stretch at 1300–1328 (DDDEEEDEEEEEEMDEDDSENDEDEDSEE) forms a coiled coil. Low complexity-rich tracts occupy residues 1347–1363 (TTTT…TATT) and 1838–1851 (SNSS…SSPP). The span at 1963-1977 (GGCHHSNHHHHHHHS) shows a compositional bias: basic residues. The UBR-type zinc-finger motif lies at 2042–2113 (KVCTYTFTKN…KGNPCKALKP (72 aa)). Low complexity-rich tracts occupy residues 2118–2168 (PPKQ…TNTN) and 2178–2203 (SSSS…TGSG). Over residues 2893 to 2903 (DSDDSDDEFPT) the composition is skewed to acidic residues. Over residues 2908 to 2917 (VTSSGLSTSA) the composition is skewed to low complexity. Over residues 3201–3211 (SSSNENVVDND) the composition is skewed to low complexity. The segment at 3226–3280 (EVLFSCDLCNINPITGKRWNCSNCGDFDLCNQCYQNPEKDHPKDHIFKEFIIDEP) adopts a ZZ-type zinc-finger fold. Zn(2+) is bound by residues cysteine 3231, cysteine 3234, cysteine 3246, cysteine 3249, cysteine 3255, cysteine 3258, histidine 3266, and histidine 3270. 3 disordered regions span residues 3282 to 3312 (KDGD…QDDS), 3326 to 3359 (LNNN…PTTN), and 3754 to 3776 (SSTS…SNDI). Composition is skewed to low complexity over residues 3295 to 3307 (QQQK…LQQD) and 3327 to 3358 (NNNN…TPTT). Residues 3313–3332 (EYDEELKIAISMSLNNNNNN) enclose the UIM domain. The segment covering 3754 to 3763 (SSTSQDTQQE) has biased composition (polar residues). Low complexity predominate over residues 3764-3774 (SSNNNNNNNSN). Residues 4118 to 4146 (IENQEDHKRAIQTIEKESENAHKKYQRLI) adopt a coiled-coil conformation. Low complexity predominate over residues 4182–4222 (NTSTNSTGSNNQSINSSSGNISTNSSSSSSSSFGISNQSSS). 3 disordered regions span residues 4182–4237 (NTST…GGVI), 4295–4323 (FISG…RQCP), and 4616–4671 (KILS…FDND). The segment covering 4223–4236 (GNGGGGVGSGGGGV) has biased composition (gly residues). Residues 4308 to 4317 (QQQQQQQQQQ) are compositionally biased toward low complexity. Residues 4585-4618 (QIQQQIALQQQQIQQQIQQQQQQLNESVSGLKIL) adopt a coiled-coil conformation. 2 stretches are compositionally biased toward low complexity: residues 4619 to 4635 (SPSS…ATGS) and 4645 to 4659 (SSGS…ISSS). Positions 5357–5870 (PALPFVLVLL…EYLLKLYKSV (514 aa)) are UBR4 E3 catalytic module. Residues 5476-5620 (GFTCMVCREG…WVNLNNISRV (145 aa)) form a HemiRING-type zinc finger. Residues cysteine 5479, cysteine 5482, histidine 5554, and cysteine 5557 each contribute to the Zn(2+) site. Positions 5623 to 5870 (PKFRILSHDL…EYLLKLYKSV (248 aa)) constitute a UZI domain. A coiled-coil region spans residues 5819 to 5846 (QVDVKELLNCFENELKEFQDEMEFFDDE).

Belongs to the UBR4 family.

Its pathway is protein modification; protein ubiquitination. Functionally, probable E3 ubiquitin-protein ligase. The polypeptide is Probable E3 ubiquitin-protein ligase DDB_G0283893 (Dictyostelium discoideum (Social amoeba)).